Here is an 873-residue protein sequence, read N- to C-terminus: MKQIPLILAMSLAFAAAAKGESAPDMQAAVNFDSAMLWGGANGADLSRFNYSNALRPGNYIVDIYANNYPLIRQQVRFVAAQTSGQGLKTAPAVACFTYGQLEAMQVRLRALDPALVADLKSSGRCEVLGKLFPDSRESFDFGENRLEVSIPQAYTINRFRRDISPDEWDSGITAFRLGYQYNYADYIGGLRAGRRLDLNLYSGFNFKGWYLRNSSTLGWGQGRFTRRSQRTSLQTDIPSWRARLVFGDVFSSGEYFAPYSMRGMLVGSDTAMLPYSERLYRPTIRGVARTRANVKVYQAGVLVFQDAVPPGPFAIDDYSPASYGGDLRVVVTEANGAVQTFTVPYASAVRLILPGQTQWSFSAGRYRNYRNDGQDRPWVTQLTGRHGVADGVNLYGGLLIAQAYQAGLAGLSWNTPWGAMAADATLSRSQLSTTGNANGSSLRFSYSKTLSGTNTAIRLATLRYSSSGFWNFADAVNAGPVETNGRNGRFGLYSLLGRERPRGDFSVTLSQPLGGYGSLYVSALRRTYWGSSRVDQQTQLGYSTQVGRVGVNLDVSRTENRRSTEHQVMLNLSIPLYGATSSGVVTGSLARTGSAPVQQSVNYSGMSGERDQYTYGLGVQRAGTSAQYALNGSWSGTYGEVSGQLTHGRSYSQYQINGSGGLVAHAGGVTFGQYQAGTIGLIQAEAAAGAKVVNTRNAAVDRSGYGLVSLTPYSLNEVELSPQDLPLDVQLESTVEQVIPRAGAVVALRFPTRHDVAAMLVAEPGSEGALVFGTEVRDGAGKVVGVAGQGASALVRGVSASGTLEVTRADGSICRATYDLKSAGQAVHGLPRIALACAPQGGGERGARAAGQAVAQPSAISISGKDHEPDIR.

A signal peptide spans 1–15; the sequence is MKQIPLILAMSLAFA. A disulfide bridge connects residues C815 and C838.

Belongs to the fimbrial export usher family.

It localises to the cell outer membrane. Probable porin-like protein necessary for the assembly of a pilin-type protein. The sequence is that of Outer membrane usher protein FimC (fimC) from Bordetella pertussis (strain Tohama I / ATCC BAA-589 / NCTC 13251).